Here is an 814-residue protein sequence, read N- to C-terminus: Microbial collagenase (814 aa).

Residues 1–21 (MELKILSVAIATTLTSTGVFA) form the signal peptide. Residues 22–75 (LSEPVSQVTEQHAHSAHTHGVEFNRVEYQPTATLPIQPSKATRVQSLESLDESS) constitute a propeptide that is removed on maturation. A Zn(2+)-binding site is contributed by histidine 477. Glutamate 478 is a catalytic residue. Histidine 481 is a Zn(2+) binding site. Residues 609 to 697 (APNAVITANS…VVISALGGND (89 aa)) enclose the PKD domain.

Belongs to the peptidase M9A family. Zn(2+) serves as cofactor. Post-translationally, proteolytic cleavage might yield three different active forms.

The protein resides in the secreted. It carries out the reaction Digestion of native collagen in the triple helical region at Xaa-|-Gly bonds. With synthetic peptides, a preference is shown for Gly at P3 and P1', Pro and Ala at P2 and P2', and hydroxyproline, Ala or Arg at P3'.. The protein is Microbial collagenase of Vibrio alginolyticus.